The chain runs to 253 residues: Phosphoribosylaminoimidazole-succinocarboxamide synthase (253 aa).

Belongs to the SAICAR synthetase family.

It carries out the reaction 5-amino-1-(5-phospho-D-ribosyl)imidazole-4-carboxylate + L-aspartate + ATP = (2S)-2-[5-amino-1-(5-phospho-beta-D-ribosyl)imidazole-4-carboxamido]succinate + ADP + phosphate + 2 H(+). It functions in the pathway purine metabolism; IMP biosynthesis via de novo pathway; 5-amino-1-(5-phospho-D-ribosyl)imidazole-4-carboxamide from 5-amino-1-(5-phospho-D-ribosyl)imidazole-4-carboxylate: step 1/2. In Jannaschia sp. (strain CCS1), this protein is Phosphoribosylaminoimidazole-succinocarboxamide synthase.